The following is a 110-amino-acid chain: Thioredoxin (110 aa).

The Thioredoxin domain maps to S2 to G110. C33 and C36 are disulfide-bonded.

This sequence belongs to the thioredoxin family.

In terms of biological role, participates in various redox reactions through the reversible oxidation of its active center dithiol to a disulfide and catalyzes dithiol-disulfide exchange reactions. The sequence is that of Thioredoxin (trxA) from Peptoclostridium acidaminophilum (Eubacterium acidaminophilum).